Here is a 270-residue protein sequence, read N- to C-terminus: Ribosomal RNA small subunit methyltransferase A (270 aa).

Residues H11, L13, G38, E59, D84, and N109 each contribute to the S-adenosyl-L-methionine site.

This sequence belongs to the class I-like SAM-binding methyltransferase superfamily. rRNA adenine N(6)-methyltransferase family. RsmA subfamily.

It localises to the cytoplasm. It carries out the reaction adenosine(1518)/adenosine(1519) in 16S rRNA + 4 S-adenosyl-L-methionine = N(6)-dimethyladenosine(1518)/N(6)-dimethyladenosine(1519) in 16S rRNA + 4 S-adenosyl-L-homocysteine + 4 H(+). Specifically dimethylates two adjacent adenosines (A1518 and A1519) in the loop of a conserved hairpin near the 3'-end of 16S rRNA in the 30S particle. May play a critical role in biogenesis of 30S subunits. This Crocosphaera subtropica (strain ATCC 51142 / BH68) (Cyanothece sp. (strain ATCC 51142)) protein is Ribosomal RNA small subunit methyltransferase A.